The chain runs to 508 residues: Steroid 17-alpha-hydroxylase/17,20 lyase (508 aa).

Cys-445 serves as a coordination point for heme.

The protein belongs to the cytochrome P450 family. Requires heme as cofactor.

It is found in the membrane. The enzyme catalyses a C21-steroid + reduced [NADPH--hemoprotein reductase] + O2 = a 17alpha-hydroxy-C21-steroid + oxidized [NADPH--hemoprotein reductase] + H2O + H(+). The catalysed reaction is 17alpha-hydroxyprogesterone + reduced [NADPH--hemoprotein reductase] + O2 = androst-4-ene-3,17-dione + acetate + oxidized [NADPH--hemoprotein reductase] + H2O + 2 H(+). It carries out the reaction 17alpha-hydroxypregnenolone + reduced [NADPH--hemoprotein reductase] + O2 = 3beta-hydroxyandrost-5-en-17-one + acetate + oxidized [NADPH--hemoprotein reductase] + H2O + 2 H(+). Its pathway is lipid metabolism; steroid biosynthesis. In terms of biological role, conversion of pregnenolone and progesterone to their 17-alpha-hydroxylated products and subsequently to dehydroepiandrosterone (DHEA) and androstenedione. Catalyzes both the 17-alpha-hydroxylation and the 17,20-lyase reaction. The protein is Steroid 17-alpha-hydroxylase/17,20 lyase (CYP17A1) of Gallus gallus (Chicken).